The following is a 259-amino-acid chain: AA9 family lytic polysaccharide monooxygenase E (259 aa).

The N-terminal stretch at 1-20 is a signal peptide; it reads MKATVLAGLAAVIAAQGVAG. The Cu(2+) site is built by H21 and H99. An intrachain disulfide couples C69 to C193. O2-binding residues include H179 and Q188. A Cu(2+)-binding site is contributed by Y190.

It belongs to the polysaccharide monooxygenase AA9 family. Cu(2+) serves as cofactor.

It is found in the secreted. It catalyses the reaction [(1-&gt;4)-beta-D-glucosyl]n+m + reduced acceptor + O2 = 4-dehydro-beta-D-glucosyl-[(1-&gt;4)-beta-D-glucosyl]n-1 + [(1-&gt;4)-beta-D-glucosyl]m + acceptor + H2O.. Functionally, lytic polysaccharide monooxygenase (LPMO) that depolymerizes crystalline and amorphous polysaccharides via the oxidation of scissile alpha- or beta-(1-4)-glycosidic bonds, yielding C1 or C4 oxidation products. Catalysis by LPMOs requires the reduction of the active-site copper from Cu(II) to Cu(I) by a reducing agent and H(2)O(2) or O(2) as a cosubstrate. This chain is AA9 family lytic polysaccharide monooxygenase E, found in Malbranchea cinnamomea (Thermophilic fungus).